Here is an 89-residue protein sequence, read N- to C-terminus: Small ribosomal subunit protein uS15 (89 aa).

It belongs to the universal ribosomal protein uS15 family. Part of the 30S ribosomal subunit. Forms a bridge to the 50S subunit in the 70S ribosome, contacting the 23S rRNA.

One of the primary rRNA binding proteins, it binds directly to 16S rRNA where it helps nucleate assembly of the platform of the 30S subunit by binding and bridging several RNA helices of the 16S rRNA. Its function is as follows. Forms an intersubunit bridge (bridge B4) with the 23S rRNA of the 50S subunit in the ribosome. This Bradyrhizobium sp. (strain BTAi1 / ATCC BAA-1182) protein is Small ribosomal subunit protein uS15.